Reading from the N-terminus, the 139-residue chain is Nucleoside diphosphate kinase (139 aa).

The ATP site is built by K11, F59, R87, T93, R104, and N114. H117 serves as the catalytic Pros-phosphohistidine intermediate.

It belongs to the NDK family. As to quaternary structure, homotetramer. It depends on Mg(2+) as a cofactor.

The protein resides in the cytoplasm. It carries out the reaction a 2'-deoxyribonucleoside 5'-diphosphate + ATP = a 2'-deoxyribonucleoside 5'-triphosphate + ADP. The catalysed reaction is a ribonucleoside 5'-diphosphate + ATP = a ribonucleoside 5'-triphosphate + ADP. Its function is as follows. Major role in the synthesis of nucleoside triphosphates other than ATP. The ATP gamma phosphate is transferred to the NDP beta phosphate via a ping-pong mechanism, using a phosphorylated active-site intermediate. This chain is Nucleoside diphosphate kinase, found in Wolbachia pipientis subsp. Culex pipiens (strain wPip).